Reading from the N-terminus, the 164-residue chain is Transcription elongation factor GreA (164 aa).

The protein belongs to the GreA/GreB family.

Its function is as follows. Necessary for efficient RNA polymerase transcription elongation past template-encoded arresting sites. The arresting sites in DNA have the property of trapping a certain fraction of elongating RNA polymerases that pass through, resulting in locked ternary complexes. Cleavage of the nascent transcript by cleavage factors such as GreA or GreB allows the resumption of elongation from the new 3'terminus. GreA releases sequences of 2 to 3 nucleotides. The protein is Transcription elongation factor GreA of Helicobacter pylori (strain J99 / ATCC 700824) (Campylobacter pylori J99).